Here is a 149-residue protein sequence, read N- to C-terminus: Large ribosomal subunit protein bL9 (149 aa).

Belongs to the bacterial ribosomal protein bL9 family.

Its function is as follows. Binds to the 23S rRNA. The polypeptide is Large ribosomal subunit protein bL9 (Fervidobacterium nodosum (strain ATCC 35602 / DSM 5306 / Rt17-B1)).